Reading from the N-terminus, the 182-residue chain is ATP synthase subunit b, chloroplastic (182 aa).

Residues 31–53 (IINISVVLGVLVYFGKGVLSNLL) form a helical membrane-spanning segment.

This sequence belongs to the ATPase B chain family. In terms of assembly, F-type ATPases have 2 components, F(1) - the catalytic core - and F(0) - the membrane proton channel. F(1) has five subunits: alpha(3), beta(3), gamma(1), delta(1), epsilon(1). F(0) has four main subunits: a(1), b(1), b'(1) and c(10-14). The alpha and beta chains form an alternating ring which encloses part of the gamma chain. F(1) is attached to F(0) by a central stalk formed by the gamma and epsilon chains, while a peripheral stalk is formed by the delta, b and b' chains.

It localises to the plastid. Its subcellular location is the chloroplast thylakoid membrane. In terms of biological role, f(1)F(0) ATP synthase produces ATP from ADP in the presence of a proton or sodium gradient. F-type ATPases consist of two structural domains, F(1) containing the extramembraneous catalytic core and F(0) containing the membrane proton channel, linked together by a central stalk and a peripheral stalk. During catalysis, ATP synthesis in the catalytic domain of F(1) is coupled via a rotary mechanism of the central stalk subunits to proton translocation. Its function is as follows. Component of the F(0) channel, it forms part of the peripheral stalk, linking F(1) to F(0). The polypeptide is ATP synthase subunit b, chloroplastic (Welwitschia mirabilis (Tree tumbo)).